Reading from the N-terminus, the 1063-residue chain is NAD-specific glutamate dehydrogenase (1063 aa).

This sequence belongs to the Glu/Leu/Phe/Val dehydrogenases family. Highly divergent. As to quaternary structure, homotetramer.

It carries out the reaction L-glutamate + NAD(+) + H2O = 2-oxoglutarate + NH4(+) + NADH + H(+). With respect to regulation, allosterically activated by NADP(+). This Achlya klebsiana protein is NAD-specific glutamate dehydrogenase.